A 125-amino-acid chain; its full sequence is E4-ORF1 (125 aa).

The short motif at 122–125 (ATLV) is the PDZ-binding element.

This sequence belongs to the dUTPase family. In terms of assembly, binds to human MPDZ.

It is found in the host cytoplasm. It carries out the reaction dUTP + H2O = dUMP + diphosphate + H(+). Its function is as follows. Plays a key role in virus oncogenecity in animals. Binds and sequesters human MUPP1/MPDZ protein in the cytoplasm, preventing it from playing a role in cellular proliferation regulation. Induces cell transformation, probably by inactivating MPDZ protein. The polypeptide is E4-ORF1 (E4) (Homo sapiens (Human)).